A 471-amino-acid polypeptide reads, in one-letter code: A-type ATP synthase subunit B (471 aa).

Belongs to the ATPase alpha/beta chains family. Has multiple subunits with at least A(3), B(3), C, D, E, F, H, I and proteolipid K(x).

The protein localises to the cell membrane. Component of the A-type ATP synthase that produces ATP from ADP in the presence of a proton gradient across the membrane. The B chain is a regulatory subunit. The sequence is that of A-type ATP synthase subunit B from Ignicoccus hospitalis (strain KIN4/I / DSM 18386 / JCM 14125).